We begin with the raw amino-acid sequence, 787 residues long: uncharacterized protein (787 aa).

The residue at position 1 (M1) is an N-acetylmethionine. 3 disordered regions span residues 1–115, 130–200, and 217–238; these read MFDG…NDHK, TNPF…QRSE, and VSSG…ASQD. Over residues 36–54 the composition is skewed to polar residues; it reads VPSTIKKSTNIARTSTAET. Residue S63 is modified to Phosphoserine. The segment covering 130-142 has biased composition (polar residues); the sequence is TNPFTTSANSNAH. Positions 160-169 are enriched in low complexity; the sequence is SITTSISNNT. Over residues 170 to 184 the composition is skewed to basic and acidic residues; that stretch reads TKEEIESNNDSERDS. Low complexity predominate over residues 218–230; sequence SSGSSLSLDTSEN. Phosphoserine is present on residues S254, S313, S342, S345, S390, S477, S492, S546, S683, and S699.

The protein resides in the cytoplasm. This is an uncharacterized protein from Saccharomyces cerevisiae (strain ATCC 204508 / S288c) (Baker's yeast).